The primary structure comprises 147 residues: uncharacterized protein (147 aa).

Residues 52 to 145 (YDRCLLIIDA…WLSNNYPTVC (94 aa)) enclose the Rhodanese domain.

This is an uncharacterized protein from Buchnera aphidicola subsp. Baizongia pistaciae (strain Bp).